The sequence spans 223 residues: MSKFQSNFNQKIDYVFKVVLIGDSAVGKSQLLARFSRNEFSIESKATIGVEFQTRTLEIDRKTIKAQIWDTAGQERYRAVTSAYYRGAVGAMLVYDITKRQSFDHVARWLEELRGHADKNIVIMLIGNKTDLGTLRAVPTEDAKEFAQRENLFFMETSALDSNNVEPSFLTVLTEIYRIVSKKNLVANEEGESGGDSSLLQGTKIVVAGEETESKGKGCCGTS.

Residue 22–29 (GDSAVGKS) participates in GTP binding. Positions 44–52 (SKATIGVEF) match the Effector region motif. Residues 70–74 (DTAGQ), 128–131 (NKTD), and 158–159 (SA) each bind GTP. S-geranylgeranyl cysteine attachment occurs at residues cysteine 219 and cysteine 220.

It belongs to the small GTPase superfamily. Rab family.

Its subcellular location is the cell membrane. Intracellular vesicle trafficking and protein transport. The sequence is that of Ras-related protein RABA4c (RABA4C) from Arabidopsis thaliana (Mouse-ear cress).